We begin with the raw amino-acid sequence, 367 residues long: Alanine racemase (367 aa).

The active-site Proton acceptor; specific for D-alanine is Lys34. An N6-(pyridoxal phosphate)lysine modification is found at Lys34. Substrate is bound at residue Arg131. Tyr258 serves as the catalytic Proton acceptor; specific for L-alanine. Substrate is bound at residue Met306.

The protein belongs to the alanine racemase family. Pyridoxal 5'-phosphate serves as cofactor.

It catalyses the reaction L-alanine = D-alanine. It participates in amino-acid biosynthesis; D-alanine biosynthesis; D-alanine from L-alanine: step 1/1. Its function is as follows. Catalyzes the interconversion of L-alanine and D-alanine. May also act on other amino acids. The polypeptide is Alanine racemase (alr) (Corynebacterium efficiens (strain DSM 44549 / YS-314 / AJ 12310 / JCM 11189 / NBRC 100395)).